A 569-amino-acid polypeptide reads, in one-letter code: Estrogen receptor (569 aa).

The tract at residues 1–151 (MYPKEEHSAG…GFDSGKETRF (151 aa)) is modulating. A compositionally biased stretch (polar residues) spans 28-37 (PTQTFGTSSP). The interval 28-65 (PTQTFGTSSPAEPASVGYYPAPPDPHEEHLQTLGGGSS) is disordered. 2 NR C4-type zinc fingers span residues 152-172 (CAVCSDYASGYHYGVWSCEGC) and 188-212 (CPATNQCTIDRNRRKSCQACRLRKC). A DNA-binding region (nuclear receptor) is located at residues 152 to 217 (CAVCSDYASG…RLRKCYEVGM (66 aa)). A hinge region spans residues 218–278 (MKGGIRKDRG…SGGVVSTLCM (61 aa)). Positions 223–271 (RKDRGGRSVRRERRRSSNEDRDKSSSDQCSRAGVRTTGPQDKRKKRSGG) are disordered. The segment covering 237 to 247 (RSSNEDRDKSS) has biased composition (basic and acidic residues). An NR LBD domain is found at 279–515 (SPDQVLLLLL…DLLLEMLDAQ (237 aa)). Positions 523-532 (VQRVWSQSEK) are enriched in polar residues. The disordered stretch occupies residues 523–569 (VQRVWSQSEKNPPSTPTTSSSSSNNSPRGGAAAIQSNGACHSHSPDP). A compositionally biased stretch (low complexity) spans 538–549 (PTTSSSSSNNSP).

The protein belongs to the nuclear hormone receptor family. NR3 subfamily. As to quaternary structure, binds DNA as a homodimer. Can form a heterodimer with ER-beta.

The protein resides in the nucleus. Its function is as follows. The steroid hormones and their receptors are involved in the regulation of eukaryotic gene expression and affect cellular proliferation and differentiation in target tissues. The protein is Estrogen receptor (esr1) of Danio rerio (Zebrafish).